The chain runs to 157 residues: Endoribonuclease YbeY (157 aa).

3 residues coordinate Zn(2+): H111, H115, and H121.

The protein belongs to the endoribonuclease YbeY family. The cofactor is Zn(2+).

Its subcellular location is the cytoplasm. Single strand-specific metallo-endoribonuclease involved in late-stage 70S ribosome quality control and in maturation of the 3' terminus of the 16S rRNA. This is Endoribonuclease YbeY from Pseudomonas entomophila (strain L48).